A 683-amino-acid chain; its full sequence is Methionine--tRNA ligase (683 aa).

The 'HIGH' region motif lies at 14-24 (PYANGSIHLGH). Positions 145, 148, 158, and 161 each coordinate Zn(2+). The 'KMSKS' region signature appears at 331–335 (KMSKS). Residue Lys334 coordinates ATP. The tRNA-binding domain occupies 581-683 (AFAAVDLRVA…SGAKPGQRIK (103 aa)).

It belongs to the class-I aminoacyl-tRNA synthetase family. MetG type 1 subfamily. In terms of assembly, homodimer. Zn(2+) serves as cofactor.

It localises to the cytoplasm. The enzyme catalyses tRNA(Met) + L-methionine + ATP = L-methionyl-tRNA(Met) + AMP + diphosphate. Functionally, is required not only for elongation of protein synthesis but also for the initiation of all mRNA translation through initiator tRNA(fMet) aminoacylation. The protein is Methionine--tRNA ligase of Pseudomonas fluorescens (strain SBW25).